The following is a 266-amino-acid chain: Enterotoxin type C-1 (266 aa).

The N-terminal stretch at 1 to 27 (MNKSRFISCVILIFALILVLFTPNVLA) is a signal peptide. A disulfide bridge connects residues C120 and C137.

It belongs to the staphylococcal/streptococcal toxin family. As to quaternary structure, interacts with host MHC class II molecules composed of alpha/HLA-DRA and beta/HLA-DRB1 chains.

It localises to the secreted. Functionally, staphylococcal enterotoxin that activates the host immune system by binding as unprocessed molecules to major histocompatibility (MHC) complex class II and T-cell receptor (TCR) molecules. In turn, this ternary complex activates a large number of T-lymphocytes initiating a systemic release of pro-inflammatory cytokines. Inhibits SEC1-mediated T-cell activation in the absence of MHC class II by competing with SEC1 for binding to the host TCR. Also causes the intoxication staphylococcal food poisoning syndrome. The protein is Enterotoxin type C-1 (entC1) of Staphylococcus aureus.